The primary structure comprises 312 residues: Protoheme IX farnesyltransferase (312 aa).

8 consecutive transmembrane segments (helical) span residues 33–53 (VMLL…VSIN), 54–74 (PLYG…AGAL), 105–125 (FIFG…FVNW), 126–146 (FAAL…TIWL), 154–174 (IVIG…AATG), 181–201 (FLLF…LSLF), 243–263 (IIGF…IIFI), and 291–311 (FYLA…CFII).

Belongs to the UbiA prenyltransferase family. Protoheme IX farnesyltransferase subfamily.

The protein localises to the cell inner membrane. It catalyses the reaction heme b + (2E,6E)-farnesyl diphosphate + H2O = Fe(II)-heme o + diphosphate. It participates in porphyrin-containing compound metabolism; heme O biosynthesis; heme O from protoheme: step 1/1. In terms of biological role, converts heme B (protoheme IX) to heme O by substitution of the vinyl group on carbon 2 of heme B porphyrin ring with a hydroxyethyl farnesyl side group. The sequence is that of Protoheme IX farnesyltransferase from Bartonella henselae (strain ATCC 49882 / DSM 28221 / CCUG 30454 / Houston 1) (Rochalimaea henselae).